We begin with the raw amino-acid sequence, 875 residues long: Alanine--tRNA ligase (875 aa).

4 residues coordinate Zn(2+): histidine 564, histidine 568, cysteine 666, and histidine 670.

The protein belongs to the class-II aminoacyl-tRNA synthetase family. The cofactor is Zn(2+).

Its subcellular location is the cytoplasm. The catalysed reaction is tRNA(Ala) + L-alanine + ATP = L-alanyl-tRNA(Ala) + AMP + diphosphate. Catalyzes the attachment of alanine to tRNA(Ala) in a two-step reaction: alanine is first activated by ATP to form Ala-AMP and then transferred to the acceptor end of tRNA(Ala). Also edits incorrectly charged Ser-tRNA(Ala) and Gly-tRNA(Ala) via its editing domain. The polypeptide is Alanine--tRNA ligase (Mannheimia succiniciproducens (strain KCTC 0769BP / MBEL55E)).